The chain runs to 328 residues: MKQVFVDLRPWDKELAIAALESGAAGVIADSAGPVRELGRILVIAPDGDLIPGQDIHEITIGNTEDQARAMEAARTCRIIVHTPDWTIIPLENLVACGDNVIAVVSDIKEAEQALTVLEKGVSGVLVKTDDPDLVRSICRMVQSGISGQQLHRLTVTTVKPAGMGERVCVDTCSLMVDGEGMLVGNTSSGFFLVHAETLVNPYVAPRPFRVNAGGVHAYLQVPEGKTAYLADLKAGDRVMIVHGNGSCREATVGRVKIERRPLFLVEAESECQKVSIILQNAETIRLVRPDNSAVSVTSLKPGDVVLGRVESGGRHFGMAIDETIIEK.

This sequence belongs to the archaeal-type DHQ synthase family.

The catalysed reaction is 2-amino-2,3,7-trideoxy-D-lyxo-hept-6-ulosonate + NAD(+) + H2O = 3-dehydroquinate + NH4(+) + NADH + H(+). Catalyzes the oxidative deamination and cyclization of 2-amino-3,7-dideoxy-D-threo-hept-6-ulosonic acid (ADH) to yield 3-dehydroquinate (DHQ), which is fed into the canonical shikimic pathway of aromatic amino acid biosynthesis. This chain is 3-dehydroquinate synthase, found in Methanospirillum hungatei JF-1 (strain ATCC 27890 / DSM 864 / NBRC 100397 / JF-1).